The following is a 1166-amino-acid chain: DNA-directed RNA polymerase subunit beta (1166 aa).

The protein belongs to the RNA polymerase beta chain family. The RNAP catalytic core consists of 2 alpha, 1 beta, 1 beta' and 1 omega subunit. When a sigma factor is associated with the core the holoenzyme is formed, which can initiate transcription.

It catalyses the reaction RNA(n) + a ribonucleoside 5'-triphosphate = RNA(n+1) + diphosphate. Its function is as follows. DNA-dependent RNA polymerase catalyzes the transcription of DNA into RNA using the four ribonucleoside triphosphates as substrates. The sequence is that of DNA-directed RNA polymerase subunit beta from Nocardioides sp. (strain ATCC BAA-499 / JS614).